The sequence spans 87 residues: Small ribosomal subunit protein bS20 (87 aa).

The segment at 1–26 is disordered; sequence MANIKSAKKRAIQSEKARKHNASRRS.

It belongs to the bacterial ribosomal protein bS20 family.

In terms of biological role, binds directly to 16S ribosomal RNA. The protein is Small ribosomal subunit protein bS20 of Escherichia coli O17:K52:H18 (strain UMN026 / ExPEC).